The following is a 91-amino-acid chain: Small ribosomal subunit protein uS17 (91 aa).

This sequence belongs to the universal ribosomal protein uS17 family. In terms of assembly, part of the 30S ribosomal subunit.

Functionally, one of the primary rRNA binding proteins, it binds specifically to the 5'-end of 16S ribosomal RNA. The polypeptide is Small ribosomal subunit protein uS17 (Psychrobacter cryohalolentis (strain ATCC BAA-1226 / DSM 17306 / VKM B-2378 / K5)).